The primary structure comprises 708 residues: Polyribonucleotide nucleotidyltransferase (708 aa).

D490 and D496 together coordinate Mg(2+). The 63-residue stretch at 557-619 folds into the KH domain; that stretch reads PRIETMTIPK…KSIDDAIRLI (63 aa). The 71-residue stretch at 629–699 folds into the S1 motif domain; that stretch reads GEVYKGKVRS…KTGKFKLSRK (71 aa).

Belongs to the polyribonucleotide nucleotidyltransferase family. Mg(2+) is required as a cofactor.

It localises to the cytoplasm. It carries out the reaction RNA(n+1) + phosphate = RNA(n) + a ribonucleoside 5'-diphosphate. In terms of biological role, involved in mRNA degradation. Catalyzes the phosphorolysis of single-stranded polyribonucleotides processively in the 3'- to 5'-direction. The sequence is that of Polyribonucleotide nucleotidyltransferase from Bacteroides fragilis (strain ATCC 25285 / DSM 2151 / CCUG 4856 / JCM 11019 / LMG 10263 / NCTC 9343 / Onslow / VPI 2553 / EN-2).